A 418-amino-acid polypeptide reads, in one-letter code: Deubiquitinase and deneddylase Dub1 (418 aa).

Residues 1–11 are compositionally biased toward polar residues; that stretch reads MLSPTNSTSKT. The segment at 1–23 is disordered; that stretch reads MLSPTNSTSKTAPVPPQDSSKPV. Residues 40-60 traverse the membrane as a helical segment; it reads TALVVLLVVVTLGLILLFYSF. The tract at residues 72–145 is disordered; that stretch reads TRPSTKEQPT…LPPKAPKPVK (74 aa). The span at 86-141 shows a compositional bias: pro residues; the sequence is VPLPSPPLAVPRPSTPPPPVISRPSMPPAPTPAISPPSTPSAPKPSTPPPLPPKAP. Catalysis depends on residues His-288, Asp-305, and Cys-358.

It belongs to the peptidase C48 family.

It is found in the secreted. It localises to the host cell. The protein localises to the membrane. Its function is as follows. Effector proteins function to alter host cell physiology and promote bacterial survival in host tissues. This protease possesses deubiquitinating and deneddylating activities. This Chlamydia trachomatis serovar E (strain Sweden2) protein is Deubiquitinase and deneddylase Dub1 (cdu1).